Here is a 266-residue protein sequence, read N- to C-terminus: Undecaprenyl-diphosphatase (266 aa).

A run of 8 helical transmembrane segments spans residues Met-1 to Ile-21, Gln-39 to Phe-59, Trp-87 to Ile-107, Ala-111 to Ala-131, Leu-150 to Thr-172, Phe-187 to Leu-207, Ala-218 to Leu-238, and Ile-244 to Val-264.

Belongs to the UppP family.

Its subcellular location is the cell inner membrane. The catalysed reaction is di-trans,octa-cis-undecaprenyl diphosphate + H2O = di-trans,octa-cis-undecaprenyl phosphate + phosphate + H(+). Functionally, catalyzes the dephosphorylation of undecaprenyl diphosphate (UPP). Confers resistance to bacitracin. This Pseudoalteromonas atlantica (strain T6c / ATCC BAA-1087) protein is Undecaprenyl-diphosphatase.